The chain runs to 462 residues: A-type ATP synthase subunit B (462 aa).

Belongs to the ATPase alpha/beta chains family. As to quaternary structure, has multiple subunits with at least A(3), B(3), C, D, E, F, H, I and proteolipid K(x).

It localises to the cell membrane. Component of the A-type ATP synthase that produces ATP from ADP in the presence of a proton gradient across the membrane. The B chain is a regulatory subunit. This is A-type ATP synthase subunit B from Pyrococcus furiosus (strain ATCC 43587 / DSM 3638 / JCM 8422 / Vc1).